Consider the following 145-residue polypeptide: Cell wall teichoic acid glycosylation protein GtcA (145 aa).

Helical transmembrane passes span 21–41, 52–69, 96–116, and 121–141; these read ILMY…TFWL, IANT…YFSN, FLTY…LSIN, and KIWT…WIIF.

Belongs to the GtrA family.

It localises to the cell membrane. Functionally, involved in the decoration of cell wall teichoic acid with galactose and glucose. The sequence is that of Cell wall teichoic acid glycosylation protein GtcA (gtcA) from Listeria monocytogenes serovar 1/2a (strain ATCC BAA-679 / EGD-e).